We begin with the raw amino-acid sequence, 545 residues long: Threonine--tRNA ligase catalytic subunit (545 aa).

Residues Asp139–Pro433 form a catalytic region. The Zn(2+) site is built by Cys231, His282, and His410.

The protein belongs to the class-II aminoacyl-tRNA synthetase family. Homodimer. Probably interacts with its editing subunit. Zn(2+) is required as a cofactor.

It is found in the cytoplasm. It catalyses the reaction tRNA(Thr) + L-threonine + ATP = L-threonyl-tRNA(Thr) + AMP + diphosphate + H(+). Functionally, catalyzes the attachment of threonine to tRNA(Thr) in a two-step reaction: L-threonine is first activated by ATP to form Thr-AMP and then transferred to the acceptor end of tRNA(Thr). Also activates L-serine and transfers it to tRNA(Thr) but cannot deacylate incorrectly charged amino acid; unlike most archaea the editing function is found in a freestanding protein. This is Threonine--tRNA ligase catalytic subunit from Saccharolobus islandicus (strain Y.G.57.14 / Yellowstone #1) (Sulfolobus islandicus).